The following is a 502-amino-acid chain: Nondiscriminating glutamyl-tRNA synthetase EARS2, mitochondrial (502 aa).

The transit peptide at 1-20 (MAGMLREVCGAAASGLRVRF) directs the protein to the mitochondrion. 19-21 (RFG) provides a ligand contact to L-glutamate. The short motif at 24–32 (PTGFLHLGG) is the 'HIGH' region element. His-29 provides a ligand contact to ATP. Residues Glu-55, 207–211 (YHLAN), and Arg-225 each bind L-glutamate. Residues Glu-228 and 263–267 (KLSKR) each bind ATP. A 'KMSKS' region motif is present at residues 263 to 267 (KLSKR).

It belongs to the class-I aminoacyl-tRNA synthetase family. Glutamate--tRNA ligase type 1 subfamily.

It is found in the mitochondrion matrix. The catalysed reaction is tRNA(Glx) + L-glutamate + ATP = L-glutamyl-tRNA(Glx) + AMP + diphosphate. It carries out the reaction tRNA(Glu) + L-glutamate + ATP = L-glutamyl-tRNA(Glu) + AMP + diphosphate. It catalyses the reaction tRNA(Gln) + L-glutamate + ATP = L-glutamyl-tRNA(Gln) + AMP + diphosphate. Its function is as follows. Non-discriminating glutamyl-tRNA synthetase that catalyzes aminoacylation of both mitochondrial tRNA(Glu) and tRNA(Gln) and participates in RNA aminoacylation for mitochondrial protein translation. Attachs glutamate to tRNA(Glu) or tRNA(Gln) in a two-step reaction: glutamate is first activated by ATP to form Glu-AMP and then transferred to the acceptor end of tRNA(Glu) or tRNA(Gln). The polypeptide is Nondiscriminating glutamyl-tRNA synthetase EARS2, mitochondrial (Gallus gallus (Chicken)).